Here is a 924-residue protein sequence, read N- to C-terminus: Translation initiation factor IF-2 (924 aa).

Residues 118–325 (PSTAHREELA…QAPVVGGVRL (208 aa)) are disordered. Pro residues-rich tracts occupy residues 150–173 (APHPGHPGMPTGPHPGPAPKPGGR) and 192–201 (IPRPPAPRPS). The segment covering 202–212 (ASPSSMSPRPG) has biased composition (low complexity). Over residues 229–295 (RPGGGRPGAP…GAAGAFGRPG (67 aa)) the composition is skewed to gly residues. Positions 299–308 (RRGRKSKRQK) are enriched in basic residues. The region spanning 420 to 591 (VRPPVVTVMG…AVLLTADAAL (172 aa)) is the tr-type G domain. Residues 429–436 (GHVDHGKT) are G1. A GTP-binding site is contributed by 429–436 (GHVDHGKT). The G2 stretch occupies residues 454–458 (GITQH). The segment at 479 to 482 (DTPG) is G3. Residues 479–483 (DTPGH) and 533–536 (NKID) each bind GTP. A G4 region spans residues 533-536 (NKID). Residues 569–571 (SAK) form a G5 region.

It belongs to the TRAFAC class translation factor GTPase superfamily. Classic translation factor GTPase family. IF-2 subfamily.

It is found in the cytoplasm. One of the essential components for the initiation of protein synthesis. Protects formylmethionyl-tRNA from spontaneous hydrolysis and promotes its binding to the 30S ribosomal subunits. Also involved in the hydrolysis of GTP during the formation of the 70S ribosomal complex. The protein is Translation initiation factor IF-2 of Mycobacterium leprae (strain Br4923).